The following is a 396-amino-acid chain: Peptide chain release factor 1, mitochondrial (396 aa).

N5-methylglutamine is present on Gln268. Residues 317-340 form a disordered region; that stretch reads LEKEEKERNARKDQVSTTDRSDKI.

This sequence belongs to the prokaryotic/mitochondrial release factor family. Post-translationally, methylation of glutamine in the GGQ triplet is conserved from bacteria to mammals.

The protein localises to the mitochondrion. Mitochondrial peptide chain release factor that directs the termination of translation in response to the peptide chain termination codons UAA and UAG. In Kluyveromyces lactis (strain ATCC 8585 / CBS 2359 / DSM 70799 / NBRC 1267 / NRRL Y-1140 / WM37) (Yeast), this protein is Peptide chain release factor 1, mitochondrial (MRF1).